Here is a 2561-residue protein sequence, read N- to C-terminus: Squalestatin hexaketide synthase (2561 aa).

A disordered region spans residues 1 to 77; it reads MDVSKEEGQR…NGTTNITPEF (77 aa). Residues 20-74 are compositionally biased toward low complexity; the sequence is NETTNGHTNGYTNGHTNGHTNGTTNATTNGTTNGTMNGTTNGTTNRTTNGTTNIT. The Ketosynthase family 3 (KS3) domain occupies 83-503; it reads QVPVAICGIG…GSNTHIIIDS (421 aa). Catalysis depends on for beta-ketoacyl synthase activity residues Cys-253, His-390, and His-427. Residues 603–925 are malonyl-CoA:ACP transacylase (MAT) domain; that stretch reads FIFTGQGAQW…LEAIGKLFCF (323 aa). The segment at 972–1101 is N-terminal hotdog fold; the sequence is HELLGERSLE…GLVTASVVIS (130 aa). A dehydratase (DH) domain region spans residues 972 to 1253; the sequence is HELLGERSLE…RGFKCKRTDE (282 aa). In terms of domain architecture, PKS/mFAS DH spans 972 to 1257; the sequence is HELLGERSLE…CKRTDESFIQ (286 aa). Catalysis depends on His-1004, which acts as the Proton acceptor; for dehydratase activity. Residues 1112 to 1257 are C-terminal hotdog fold; sequence TFPRKVDTSR…CKRTDESFIQ (146 aa). Asp-1174 acts as the Proton donor; for dehydratase activity in catalysis. The segment at 1421–1599 is methyltransferase (CMet) domain; it reads SFFQAAGLNK…GFEGAGTVVL (179 aa). Residues 1826–2146 form an enoyl reductase (ER) (ER) domain region; the sequence is GMLNTLHWVG…RGVHMGRIVV (321 aa). The tract at residues 2170–2343 is ketoreductase (KR) domain; it reads STYLLTGGMG…PASVIDIAAI (174 aa). The 79-residue stretch at 2472–2550 folds into the Carrier domain; it reads VLFAQEIAKR…SLGRLATKRL (79 aa). Ser-2509 carries the post-translational modification O-(pantetheine 4'-phosphoryl)serine.

The protein operates within secondary metabolite biosynthesis. Its function is as follows. Highly reducing polyketide synthase (HR-PKS); part of the gene cluster that mediates the biosynthesis of squalestatin S1 (SQS1, also known as zaragozic acid A), a heavily oxidized fungal polyketide that offers potent cholesterol lowering activity by targeting squalene synthase (SS). SQS1 is composed of a 2,8-dioxobicyclic[3.2.1]octane-3,4,5-tricarboxyclic acid core that is connected to two lipophilic polyketide arms. These initial steps feature the priming of an unusual benzoic acid starter unit onto the highly reducing polyketide synthase pks2, followed by oxaloacetate extension and product release to generate a tricarboxylic acid containing product. The phenylalanine ammonia lyase (PAL) M7 and the acyl-CoA ligase M9 are involved in transforming phenylalanine into benzoyl-CoA. The citrate synthase-like protein R3 is involved in connecting the C-alpha-carbons of the hexaketide chain and oxaloacetate to afford the tricarboxylic acid unit. The potential hydrolytic enzymes, M8 and M10, are in close proximity to pks2 and may participate in product release. On the other side, the tetraketide arm is synthesized by a the squalestatin tetraketide synthase pks1 and enzymatically esterified to the core in the last biosynthetic step, by the acetyltransferase M4. The biosynthesis of the tetraketide must involve 3 rounds of chain extension. After the first and second rounds methyl-transfer occurs, and in all rounds of extension the ketoreductase and dehydratase are active. The enoyl reductase and C-MeT of pks1 are not active in the final round of extension. The acetyltransferase M4 appears to have a broad substrate selectivity for its acyl CoA substrate, allowing the in vitro synthesis of novel squalestatins. The biosynthesis of SQS1 requires several oxidative steps likely performed by oxidoreductases M1, R1 and R2. Finally, in support of the identification of the cluster as being responsible for SQS1 production, the cluster contains a gene encoding a putative squalene synthase (SS) R6, suggesting a likely mechanism for self-resistance. In Phoma sp. (strain ATCC 20986 / MF5453), this protein is Squalestatin hexaketide synthase.